We begin with the raw amino-acid sequence, 151 residues long: Large ribosomal subunit protein bL9 (151 aa).

This sequence belongs to the bacterial ribosomal protein bL9 family.

Its function is as follows. Binds to the 23S rRNA. This is Large ribosomal subunit protein bL9 from Mycolicibacterium smegmatis (strain ATCC 700084 / mc(2)155) (Mycobacterium smegmatis).